We begin with the raw amino-acid sequence, 140 residues long: uncharacterized protein (140 aa).

This is an uncharacterized protein from Acidianus ambivalens (Desulfurolobus ambivalens).